Here is a 145-residue protein sequence, read N- to C-terminus: Small ribosomal subunit protein uS19 (145 aa).

Ala2 carries the N-acetylalanine modification. Lys108 participates in a covalent cross-link: Glycyl lysine isopeptide (Lys-Gly) (interchain with G-Cter in SUMO2).

This sequence belongs to the universal ribosomal protein uS19 family. As to quaternary structure, component of the small ribosomal subunit.

The protein localises to the cytoplasm. Its function is as follows. Component of the small ribosomal subunit. The ribosome is a large ribonucleoprotein complex responsible for the synthesis of proteins in the cell. This Bos taurus (Bovine) protein is Small ribosomal subunit protein uS19 (RPS15).